The sequence spans 340 residues: Adenosine deaminase-like protein (340 aa).

Positions 14 and 16 each coordinate Zn(2+). Residues His-16, Asn-18, His-68, 100 to 103 (TTPK), and Gly-173 each bind N(6)-methyl-AMP. His-200 is a Zn(2+) binding site. Residues Glu-203, Asp-278, and Asp-279 each contribute to the N(6)-methyl-AMP site. Glu-203 (proton donor) is an active-site residue. Asp-278 contacts Zn(2+).

The protein belongs to the metallo-dependent hydrolases superfamily. Adenosine and AMP deaminases family. Monomer. Zn(2+) is required as a cofactor.

The catalysed reaction is N(6)-methyl-AMP + H2O + H(+) = IMP + methylamine. Its function is as follows. Catalyzes the hydrolysis of the free cytosolic methylated adenosine nucleotide N(6)-methyl-AMP (N6-mAMP) to produce inositol monophosphate (IMP) and methylamine. Is required for the catabolism of cytosolic N6-mAMP, which is derived from the degradation of mRNA containing N6-methylated adenine (m6A). The chain is Adenosine deaminase-like protein from Drosophila pseudoobscura pseudoobscura (Fruit fly).